An 88-amino-acid polypeptide reads, in one-letter code: Selenoprotein W (88 aa).

A cross-link (cysteinyl-selenocysteine (Cys-Sec); redox-active) is located at residues 10-13 (CGAU). Position 13 (Sec13) is a non-standard amino acid, selenocysteine. Cys37 bears the S-glutathionyl cysteine mark.

The protein belongs to the SelWTH family. Selenoprotein W subfamily. Interacts with DPYSL2, PRDX1, YWHAB, YWHAG, HSP70 and HSP90. In terms of tissue distribution, in the embryo, expressed in the developing nervous system and in mesoderm-derived tissues such as heart and limbs. In the adult, predominantly expressed in brain, skeletal muscle and heart.

The protein resides in the cytoplasm. Plays a role as a glutathione (GSH)-dependent antioxidant. May be involved in a redox-related process. May play a role in the myopathies of selenium deficiency. This chain is Selenoprotein W, found in Mus musculus (Mouse).